The primary structure comprises 135 residues: Putative large ribosomal subunit protein eL32' (135 aa).

This sequence belongs to the eukaryotic ribosomal protein eL32 family.

This Mus musculus (Mouse) protein is Putative large ribosomal subunit protein eL32' (Rpl32-ps).